The chain runs to 536 residues: MAKDPGRVLIFDTTLRDGEQSPGASLNLEEKLAIAQQLARLGVDIIEAGFPYASQGDFTAVQRIAEQVGGEEGPIICGLARASKADIKACGEAIAPAPKKRIHTFIATSDIHLEHKLRKTREEVIQIVPEMVHYAKSFSEDVEFSCEDAARSDPDFLYELIELAISAGAGTINIPDTVGYITPSEFGELIQGIDANVPNIDEAILSVHGHNDLGLAVANFLEAIKRGARQLECTINGIGERAGNAALEELVMALHVRRSFYNPFFGRDPESPTPLTAIRTEEITKTSRLVSNLTGMVVQPNKAIVGANAFAHESGIHQDGVLKNRLTYEIVDAKTVGLTDNRISLGKLSGRSAVRARLEELGYDLTRDDLNEAFAKFKDLADRKREITDRDLEAIVSEQVMQPDARFQLQLVQVSCGTTLKPTATVTLADQDGTEQTAVALGTGPVDAVCKALDSLAGESNELIEFSVKSVTEGIDALGEVTIRLRREGKIFSGHSADTDVVVAAAQAYVNALNRLIYFEKKNPIHPQHDLIKANL.

Residues 8–273 (VLIFDTTLRD…FFGRDPESPT (266 aa)) form the Pyruvate carboxyltransferase domain. D17, H208, H210, and N244 together coordinate Mn(2+). Residues 408–536 (QLQLVQVSCG…PQHDLIKANL (129 aa)) form a regulatory domain region.

Belongs to the alpha-IPM synthase/homocitrate synthase family. LeuA type 1 subfamily. Homodimer. The cofactor is Mn(2+).

It is found in the cytoplasm. The catalysed reaction is 3-methyl-2-oxobutanoate + acetyl-CoA + H2O = (2S)-2-isopropylmalate + CoA + H(+). The protein operates within amino-acid biosynthesis; L-leucine biosynthesis; L-leucine from 3-methyl-2-oxobutanoate: step 1/4. Its function is as follows. Catalyzes the condensation of the acetyl group of acetyl-CoA with 3-methyl-2-oxobutanoate (2-ketoisovalerate) to form 3-carboxy-3-hydroxy-4-methylpentanoate (2-isopropylmalate). The chain is 2-isopropylmalate synthase from Prochlorococcus marinus (strain MIT 9211).